Consider the following 530-residue polypeptide: MKSIIFNEIKKILECDFTLENPKDKNLAHFATPLAFSLAKELKKSPMLIASDLASKFQNHDCFESVEAVNGYLNFRISKTFLNELANQALANPNDFSKGEKKQESFLLEYVSANPTGPLHIGHARGAVFGDTLTRLARHLGYKFDTEYYVNDAGNQIYLLGLSILLSVKENILHENVEYPEQYYKGEYIADLAKEAFEKFGKEFFSEENIPSLADWAKDKMLILIKQNLEQAKIKIDSYVSERSYYDALNATLESLKEHKGIYEQEGKIWLASSQKGDEKDRVIIREDGRGTYLAADIVYHKDKMSRGYGKCINIWGADHHGYIPRMKAAMEFLGFDSNNLEIILAQMVSLLKDGEPYKMSKRAGNFILMSDVIDEIGSDALRYIFLSKKCDTHLEFDISDLQKEDSSNPVYYINYAHARIHQVFAKAGKKIDDVMRADLQSLNQDGVNLLFEALNLKAILNDAFEARALQKIPDYLKNLAANFHKFYNENKVVGSINENDLLKLFSLVALSIKTAFSLMGIEAKNKMEH.

Residues 113-123 (ANPTGPLHIGH) carry the 'HIGH' region motif.

This sequence belongs to the class-I aminoacyl-tRNA synthetase family. Monomer.

It is found in the cytoplasm. The enzyme catalyses tRNA(Arg) + L-arginine + ATP = L-arginyl-tRNA(Arg) + AMP + diphosphate. This chain is Arginine--tRNA ligase, found in Campylobacter jejuni subsp. jejuni serotype O:6 (strain 81116 / NCTC 11828).